The chain runs to 496 residues: Cobyric acid synthase (496 aa).

The region spanning 264-458 is the GATase cobBQ-type domain; that stretch reads HTRIAVVAYP…LHGLFEDAAV (195 aa). Cys345 functions as the Nucleophile in the catalytic mechanism. His450 is an active-site residue.

Belongs to the CobB/CobQ family. CobQ subfamily.

It participates in cofactor biosynthesis; adenosylcobalamin biosynthesis. In terms of biological role, catalyzes amidations at positions B, D, E, and G on adenosylcobyrinic A,C-diamide. NH(2) groups are provided by glutamine, and one molecule of ATP is hydrogenolyzed for each amidation. The chain is Cobyric acid synthase from Acidovorax ebreus (strain TPSY) (Diaphorobacter sp. (strain TPSY)).